The primary structure comprises 168 residues: Cytochrome c oxidase subunit 2 (168 aa).

At 1–3 the chain is on the cytoplasmic side; the sequence is MVD. The chain crosses the membrane as a helical span at residues 4–38; sequence EHKAHKAILAYEKGWLAFSLAMLFVFIALIAYTLA. The Periplasmic portion of the chain corresponds to 39-168; that stretch reads THTAGVIPAG…NMFGTIVVKE (130 aa). Cu cation contacts are provided by H114, C149, C153, and H157.

It belongs to the cytochrome c oxidase subunit 2 family.

The protein resides in the cell membrane. It catalyses the reaction 4 Fe(II)-[cytochrome c] + O2 + 8 H(+)(in) = 4 Fe(III)-[cytochrome c] + 2 H2O + 4 H(+)(out). Subunits I and II form the functional core of the enzyme complex. Electrons originating in cytochrome c are transferred via heme a and Cu(A) to the binuclear center formed by heme a3 and Cu(B). In Thermus thermophilus (strain ATCC 27634 / DSM 579 / HB8), this protein is Cytochrome c oxidase subunit 2 (cbaB).